The chain runs to 178 residues: C-phycoerythrin class 2 subunit beta (178 aa).

Phycourobilin is bound by residues C50 and C61. Residues C82 and C159 each coordinate (2R,3E)-phycoerythrobilin.

This sequence belongs to the phycobiliprotein family. In terms of assembly, heterodimer of an alpha and a beta chain. In terms of processing, contains two covalently linked phycoerythrobilin chromophores and one covalently linked phycourobilin chromophore.

The protein resides in the cellular thylakoid membrane. In terms of biological role, light-harvesting photosynthetic bile pigment-protein from the phycobiliprotein complex. The protein is C-phycoerythrin class 2 subunit beta (mpeB) of Synechococcus sp. (strain WH8020).